The sequence spans 381 residues: Queuine tRNA-ribosyltransferase (381 aa).

Aspartate 96 acts as the Proton acceptor in catalysis. Substrate contacts are provided by residues 96–100 (DSGGF), aspartate 150, glutamine 193, and glycine 220. The tract at residues 251–257 (GVGAPDS) is RNA binding. The active-site Nucleophile is aspartate 270. Residues 275–279 (TRIAR) form an RNA binding; important for wobble base 34 recognition region. Zn(2+) is bound by residues cysteine 308, cysteine 310, cysteine 313, and histidine 339.

The protein belongs to the queuine tRNA-ribosyltransferase family. In terms of assembly, homodimer. Within each dimer, one monomer is responsible for RNA recognition and catalysis, while the other monomer binds to the replacement base PreQ1. Zn(2+) is required as a cofactor.

It carries out the reaction 7-aminomethyl-7-carbaguanine + guanosine(34) in tRNA = 7-aminomethyl-7-carbaguanosine(34) in tRNA + guanine. Its pathway is tRNA modification; tRNA-queuosine biosynthesis. In terms of biological role, catalyzes the base-exchange of a guanine (G) residue with the queuine precursor 7-aminomethyl-7-deazaguanine (PreQ1) at position 34 (anticodon wobble position) in tRNAs with GU(N) anticodons (tRNA-Asp, -Asn, -His and -Tyr). Catalysis occurs through a double-displacement mechanism. The nucleophile active site attacks the C1' of nucleotide 34 to detach the guanine base from the RNA, forming a covalent enzyme-RNA intermediate. The proton acceptor active site deprotonates the incoming PreQ1, allowing a nucleophilic attack on the C1' of the ribose to form the product. After dissociation, two additional enzymatic reactions on the tRNA convert PreQ1 to queuine (Q), resulting in the hypermodified nucleoside queuosine (7-(((4,5-cis-dihydroxy-2-cyclopenten-1-yl)amino)methyl)-7-deazaguanosine). This is Queuine tRNA-ribosyltransferase from Enterococcus faecalis (strain ATCC 700802 / V583).